A 600-amino-acid polypeptide reads, in one-letter code: tRNA(Ile)-lysidine synthase, chloroplastic (600 aa).

35 to 40 (SGGQDS) contributes to the ATP binding site.

It belongs to the tRNA(Ile)-lysidine synthase family.

It localises to the plastid. It is found in the chloroplast. It catalyses the reaction cytidine(34) in tRNA(Ile2) + L-lysine + ATP = lysidine(34) in tRNA(Ile2) + AMP + diphosphate + H(+). In terms of biological role, ligates lysine onto the cytidine present at position 34 of the AUA codon-specific tRNA(Ile) that contains the anticodon CAU, in an ATP-dependent manner. Cytidine is converted to lysidine, thus changing the amino acid specificity of the tRNA from methionine to isoleucine. The sequence is that of tRNA(Ile)-lysidine synthase, chloroplastic from Tupiella akineta (Green alga).